Consider the following 511-residue polypeptide: 2,3-bisphosphoglycerate-independent phosphoglycerate mutase (511 aa).

Mn(2+)-binding residues include aspartate 12 and serine 62. Serine 62 acts as the Phosphoserine intermediate in catalysis. Residues histidine 123, arginine 153 to aspartate 154, arginine 185, arginine 191, arginine 260 to arginine 263, and lysine 333 each bind substrate. Aspartate 400, histidine 404, aspartate 441, histidine 442, and histidine 460 together coordinate Mn(2+).

The protein belongs to the BPG-independent phosphoglycerate mutase family. Monomer. It depends on Mn(2+) as a cofactor.

It carries out the reaction (2R)-2-phosphoglycerate = (2R)-3-phosphoglycerate. It functions in the pathway carbohydrate degradation; glycolysis; pyruvate from D-glyceraldehyde 3-phosphate: step 3/5. In terms of biological role, catalyzes the interconversion of 2-phosphoglycerate and 3-phosphoglycerate. The protein is 2,3-bisphosphoglycerate-independent phosphoglycerate mutase of Clostridium novyi (strain NT).